A 109-amino-acid chain; its full sequence is ATP-dependent Clp protease adapter protein ClpS (109 aa).

A disordered region spans residues 1-21; the sequence is MAERKQGGQNNGAGSSVITEV.

Belongs to the ClpS family. Binds to the N-terminal domain of the chaperone ClpA.

Its function is as follows. Involved in the modulation of the specificity of the ClpAP-mediated ATP-dependent protein degradation. The sequence is that of ATP-dependent Clp protease adapter protein ClpS from Caulobacter sp. (strain K31).